The sequence spans 253 residues: Flap endonuclease Xni (253 aa).

Asp105 is a Mg(2+) binding site. One can recognise a 5'-3' exonuclease domain in the interval 162–251 (ERHQLLDYIA…HLKLSDLRVN (90 aa)). Positions 172, 181, 183, and 186 each coordinate K(+). The tract at residues 185-190 (GIGPKS) is interaction with DNA.

The protein belongs to the Xni family. Mg(2+) serves as cofactor. K(+) is required as a cofactor.

Has flap endonuclease activity. During DNA replication, flap endonucleases cleave the 5'-overhanging flap structure that is generated by displacement synthesis when DNA polymerase encounters the 5'-end of a downstream Okazaki fragment. The sequence is that of Flap endonuclease Xni from Shewanella amazonensis (strain ATCC BAA-1098 / SB2B).